The chain runs to 974 residues: Serine/threonine-protein kinase 10 (974 aa).

Residues 37–295 form the Protein kinase domain; that stretch reads WEIIGELGDG…AAQLLEHPFV (259 aa). ATP is bound by residues 43-51 and K66; that span reads LGDGAFGKV. Residue D158 is the Proton acceptor of the active site. A compositionally biased stretch (acidic residues) spans 320-332; that stretch reads EDNHEDGEDEDPA. Residues 320-479 are disordered; sequence EDNHEDGEDE…EKEDHCEETQ (160 aa). Polar residues predominate over residues 343–353; sequence DPSQTSATSLN. 2 stretches are compositionally biased toward basic and acidic residues: residues 382-406 and 458-477; these read PLKE…ESEA and TMEK…HCEE. Coiled-coil stretches lie at residues 605 to 729 and 870 to 950; these read QKEQ…EEQK and EKVK…EHLK.

Belongs to the protein kinase superfamily. STE Ser/Thr protein kinase family. STE20 subfamily. As to quaternary structure, homodimer. Post-translationally, autophosphorylates.

Its subcellular location is the cell membrane. The enzyme catalyses L-seryl-[protein] + ATP = O-phospho-L-seryl-[protein] + ADP + H(+). The catalysed reaction is L-threonyl-[protein] + ATP = O-phospho-L-threonyl-[protein] + ADP + H(+). In terms of biological role, may act as a polo kinase kinase by mediating phosphorylation of plk1. The sequence is that of Serine/threonine-protein kinase 10 (stk10) from Danio rerio (Zebrafish).